A 346-amino-acid chain; its full sequence is Phosphoribosylformylglycinamidine cyclo-ligase (346 aa).

The protein belongs to the AIR synthase family.

The protein resides in the cytoplasm. It catalyses the reaction 2-formamido-N(1)-(5-O-phospho-beta-D-ribosyl)acetamidine + ATP = 5-amino-1-(5-phospho-beta-D-ribosyl)imidazole + ADP + phosphate + H(+). It participates in purine metabolism; IMP biosynthesis via de novo pathway; 5-amino-1-(5-phospho-D-ribosyl)imidazole from N(2)-formyl-N(1)-(5-phospho-D-ribosyl)glycinamide: step 2/2. The protein is Phosphoribosylformylglycinamidine cyclo-ligase of Alteromonas mediterranea (strain DSM 17117 / CIP 110805 / LMG 28347 / Deep ecotype).